Consider the following 773-residue polypeptide: Lon protease homolog 2, peroxisomal (773 aa).

The Lon N-terminal domain occupies 9-198; the sequence is LPVIVVDSGV…MCEKWMQMQR (190 aa). 336–343 contacts ATP; it reads GPPGIGKT. Residues 587–766 enclose the Lon proteolytic domain; the sequence is PLPPGVCFGL…EDVIEAMMEK (180 aa). Catalysis depends on residues serine 672 and lysine 715. The Microbody targeting signal motif lies at 771–773; sequence AKL.

It belongs to the peptidase S16 family.

It is found in the peroxisome matrix. It catalyses the reaction Hydrolysis of proteins in presence of ATP.. Functionally, ATP-dependent serine protease that mediates the selective degradation of misfolded and unassembled polypeptides in the peroxisomal matrix. Necessary for type 2 peroxisome targeting signal (PTS2)-containing protein processing and facilitates peroxisome matrix protein import. This is Lon protease homolog 2, peroxisomal from Caenorhabditis briggsae.